We begin with the raw amino-acid sequence, 609 residues long: MSSPRDRVNAFYKDNLQFKNTRVVLNKEQLLIERPYMLLAVLFVMFLSLVGLLAIAGIRLHRAAVNTAEINSGLTTSIDITKSIEYQVKDVLTPLFKIIGDEVGLRTPQRFTDLTKFISDKIKFLNPDKEYDFRDINWCISPPERIKINYDQYCAHTAAEELITMLVNSSLAGTSVLPTSLVNLGRSCTGSTTTKGQFSNMSLALSGIYSGRGYNISSMITITEKGMYGSTYLVGKHNQGARRPSTAWQRDYRVFEVGIIRELGLGTPVFHMTNYLELPRQPELEICMLALGEFKLAALCLADNSVALHYGGLRDDHKIRFVKLGVWPSPADSDTLATLSAVDPTLDGLYITTHRGIIAAGKAVWVVPVTRTDDQRKMGQCRREACREKPPPFCNSTDWEPLEAGRIPAYGILTIRLGLADKLKLTIISEFGPLITHDSGMDLYTPLDGNEYWLTIPPLQNSALGTVNTLVLEPSLKISPNILTLPIRSGGGDCYTPTYLSDLADDDVKLSSNLVILPSRNLQYVSATYDTSRVEHAIVYYIYSAGRLSSYYYPVKLPIKGDPVSLQIGCFPWGLKLWCHHFCSVIDSGTRKQVTHTGAVGIEITCNSR.

The Intravirion portion of the chain corresponds to 1–34 (MSSPRDRVNAFYKDNLQFKNTRVVLNKEQLLIER). A helical; Signal-anchor for type II membrane protein membrane pass occupies residues 35–58 (PYMLLAVLFVMFLSLVGLLAIAGI). Over 59–609 (RLHRAAVNTA…VGIEITCNSR (551 aa)) the chain is Virion surface. N-linked (GlcNAc...) asparagine; by host glycans are attached at residues Asn-168, Asn-200, Asn-215, and Asn-395.

The protein belongs to the paramyxoviruses hemagglutinin-neuraminidase family. Non-sialidase subfamily.

Its subcellular location is the virion membrane. The protein resides in the host membrane. Functionally, attaches the virus to cell receptors and thereby initiating infection. Binding of H protein to the receptor induces a conformational change that allows the F protein to trigger virion/cell membranes fusion. Down-regulates human MCP/CD46 cell surface expression. The polypeptide is Hemagglutinin glycoprotein (H) (Rinderpest virus (strain L) (RDV)).